We begin with the raw amino-acid sequence, 444 residues long: Jacalin-related lectin 42 (444 aa).

At A2 the chain carries N-acetylalanine. Jacalin-type lectin domains follow at residues 2-143, 146-289, and 297-441; these read ALMV…YYIR, ATKS…YYAP, and TEKL…HVIP.

This sequence belongs to the jacalin lectin family.

This chain is Jacalin-related lectin 42 (JAL42), found in Arabidopsis thaliana (Mouse-ear cress).